A 90-amino-acid chain; its full sequence is Auxin-responsive protein SAUR19 (90 aa).

This sequence belongs to the ARG7 family. As to quaternary structure, interacts with and inhibits PP2C-D subfamily of type 2C phosphatases such as PP2C67/PP2C-D1, PP2C64/PP2C-D5 and PP2C46/PP2C-D6.

The protein resides in the cell membrane. Provide a mechanistic link between auxin and plasma membrane H(+)-ATPases (PM H(+)-ATPases, e.g. AHA1 and AHA2), and triggers PM H(+)-ATPases activity by promoting phosphorylation of their C-terminal autoinhibitory domain as a result of PP2C-D subfamily of type 2C phosphatases inhibition, thus leading to the acidification of the apoplast and the facilitation of solutes and water uptake to drive cell expansion. Prevents the apical hook maintenance of etiolated seedlings. Functions as positive effectors of cell expansion through modulation of auxin transport. In Arabidopsis thaliana (Mouse-ear cress), this protein is Auxin-responsive protein SAUR19.